Consider the following 176-residue polypeptide: Protein FAM89A (176 aa).

Residues 140–165 (DFQEQGSLRDGQGRGSPGDPSLPLTH) form a disordered region.

Belongs to the FAM89 family.

In Rattus norvegicus (Rat), this protein is Protein FAM89A (Fam89a).